The sequence spans 321 residues: GDP-L-fucose synthase (321 aa).

NADP(+)-binding positions include 10–16, 36–41, and 105–108; these read GHRGMVG, RDELNL, and LGSS. Residue Tyr136 is the Proton donor/acceptor of the active site. Residues Lys140, 163-166, and His179 contribute to the NADP(+) site; that span reads PTNL. 4 residues coordinate substrate: Arg187, Trp202, Arg209, and Asp278.

This sequence belongs to the NAD(P)-dependent epimerase/dehydratase family. Fucose synthase subfamily. As to quaternary structure, homodimer.

The protein localises to the cytoplasm. The enzyme catalyses GDP-beta-L-fucose + NADP(+) = GDP-4-dehydro-alpha-D-rhamnose + NADPH + H(+). It functions in the pathway nucleotide-sugar biosynthesis; GDP-L-fucose biosynthesis via de novo pathway; GDP-L-fucose from GDP-alpha-D-mannose: step 2/2. It participates in exopolysaccharide biosynthesis; colanic acid biosynthesis. Subject to product inhibition by NADP and GDP-fucose. Functionally, catalyzes the two-step NADP-dependent conversion of GDP-4-dehydro-6-deoxy-D-mannose to GDP-fucose, involving an epimerase and a reductase reaction. This Escherichia coli (strain K12) protein is GDP-L-fucose synthase.